Here is a 513-residue protein sequence, read N- to C-terminus: Probable cytosol aminopeptidase (513 aa).

Mn(2+) contacts are provided by Lys-275 and Asp-280. Lys-287 is a catalytic residue. Residues Asp-298, Asp-357, and Glu-359 each coordinate Mn(2+). The active site involves Arg-361.

Belongs to the peptidase M17 family. Mn(2+) is required as a cofactor.

It localises to the cytoplasm. It carries out the reaction Release of an N-terminal amino acid, Xaa-|-Yaa-, in which Xaa is preferably Leu, but may be other amino acids including Pro although not Arg or Lys, and Yaa may be Pro. Amino acid amides and methyl esters are also readily hydrolyzed, but rates on arylamides are exceedingly low.. The catalysed reaction is Release of an N-terminal amino acid, preferentially leucine, but not glutamic or aspartic acids.. Its function is as follows. Presumably involved in the processing and regular turnover of intracellular proteins. Catalyzes the removal of unsubstituted N-terminal amino acids from various peptides. The chain is Probable cytosol aminopeptidase from Streptomyces avermitilis (strain ATCC 31267 / DSM 46492 / JCM 5070 / NBRC 14893 / NCIMB 12804 / NRRL 8165 / MA-4680).